The following is a 901-amino-acid chain: HTH-type transcriptional regulator MalT (901 aa).

39–46 (SPAGYGKT) contributes to the ATP binding site. The region spanning 829–894 (ELIRTSPLTQ…AAVQHAQKLL (66 aa)) is the HTH luxR-type domain. Positions 853 to 872 (NEQIAGELEVAATTIKTHIR) form a DNA-binding region, H-T-H motif.

It belongs to the MalT family. Monomer in solution. Oligomerizes to an active state in the presence of the positive effectors ATP and maltotriose.

Activated by ATP and maltotriose, which are both required for DNA binding. Positively regulates the transcription of the maltose regulon whose gene products are responsible for uptake and catabolism of malto-oligosaccharides. Specifically binds to the promoter region of its target genes, recognizing a short DNA motif called the MalT box. This Escherichia coli O6:K15:H31 (strain 536 / UPEC) protein is HTH-type transcriptional regulator MalT.